Consider the following 130-residue polypeptide: DNA-directed RNA polymerase subunit omega (130 aa).

The interval Thr108–Glu130 is disordered.

This sequence belongs to the RNA polymerase subunit omega family. In terms of assembly, the RNAP catalytic core consists of 2 alpha, 1 beta, 1 beta' and 1 omega subunit. When a sigma factor is associated with the core the holoenzyme is formed, which can initiate transcription.

It carries out the reaction RNA(n) + a ribonucleoside 5'-triphosphate = RNA(n+1) + diphosphate. Promotes RNA polymerase assembly. Latches the N- and C-terminal regions of the beta' subunit thereby facilitating its interaction with the beta and alpha subunits. The chain is DNA-directed RNA polymerase subunit omega from Rhodopseudomonas palustris (strain ATCC BAA-98 / CGA009).